The following is a 106-amino-acid chain: Large ribosomal subunit protein uL23 (106 aa).

This sequence belongs to the universal ribosomal protein uL23 family. Part of the 50S ribosomal subunit. Contacts protein L29, and trigger factor when it is bound to the ribosome.

In terms of biological role, one of the early assembly proteins it binds 23S rRNA. One of the proteins that surrounds the polypeptide exit tunnel on the outside of the ribosome. Forms the main docking site for trigger factor binding to the ribosome. This is Large ribosomal subunit protein uL23 from Neisseria gonorrhoeae (strain ATCC 700825 / FA 1090).